Consider the following 553-residue polypeptide: Putative transport protein YidE (553 aa).

The next 5 helical transmembrane spans lie at 4 to 24, 28 to 48, 65 to 85, 95 to 115, and 158 to 178; these read IALT…IGNI, GVGF…HFVD, FGLI…FFAS, LFAV…HKIF, and MSYA…MWLM. RCK C-terminal domains follow at residues 192-276 and 279-361; these read KHES…VIGK and DTSL…VVGN. Transmembrane regions (helical) follow at residues 371–391, 393–413, 437–457, 464–484, 493–513, and 533–553; these read MLPV…PLFV, GFPV…ALIL, LGIV…FVDT, LSWI…VGLL, YLTL…LAFA, and LVMF…WGMG.

It belongs to the AAE transporter (TC 2.A.81) family. YidE subfamily.

It is found in the cell membrane. The sequence is that of Putative transport protein YidE from Salmonella newport (strain SL254).